The chain runs to 344 residues: tRNA N6-adenosine threonylcarbamoyltransferase (344 aa).

Positions 119 and 123 each coordinate Fe cation. Substrate-binding positions include 141 to 145, aspartate 174, glycine 187, aspartate 191, and asparagine 280; that span reads VVSGG. Aspartate 310 is a Fe cation binding site.

This sequence belongs to the KAE1 / TsaD family. The cofactor is Fe(2+).

The protein resides in the cytoplasm. It carries out the reaction L-threonylcarbamoyladenylate + adenosine(37) in tRNA = N(6)-L-threonylcarbamoyladenosine(37) in tRNA + AMP + H(+). Functionally, required for the formation of a threonylcarbamoyl group on adenosine at position 37 (t(6)A37) in tRNAs that read codons beginning with adenine. Is involved in the transfer of the threonylcarbamoyl moiety of threonylcarbamoyl-AMP (TC-AMP) to the N6 group of A37, together with TsaE and TsaB. TsaD likely plays a direct catalytic role in this reaction. The polypeptide is tRNA N6-adenosine threonylcarbamoyltransferase (Listeria innocua serovar 6a (strain ATCC BAA-680 / CLIP 11262)).